An 80-amino-acid polypeptide reads, in one-letter code: Anaphase-promoting complex subunit hcn1 (80 aa).

At M1 the chain carries N-acetylmethionine. Positions 26–54 (QTLDSESTTEEALQKNEESTRLSPEKKKI) are disordered. The span at 37-54 (ALQKNEESTRLSPEKKKI) shows a compositional bias: basic and acidic residues.

In terms of assembly, the APC/C is composed of at least 13 subunits: apc1, apc2, nuc2, apc4, apc5, cut9, apc8, apc10, apc11, hcn1, apc13, apc14 and apc15. Interacts directly (via N-terminus) with cut9.

Component of the anaphase promoting complex/cyclosome (APC/C), a cell cycle-regulated E3 ubiquitin-protein ligase complex that controls progression through mitosis and the G1 phase of the cell cycle. The APC/C is thought to confer substrate specificity and, in the presence of ubiquitin-conjugating E2 enzymes, it catalyzes the formation of protein-ubiquitin conjugates that are subsequently degraded by the 26S proteasome. Has a role in assembling cut9 in the 20S APC/cyclosome. The polypeptide is Anaphase-promoting complex subunit hcn1 (hcn1) (Schizosaccharomyces pombe (strain 972 / ATCC 24843) (Fission yeast)).